Here is a 197-residue protein sequence, read N- to C-terminus: Holliday junction branch migration complex subunit RuvA (197 aa).

Residues 1–63 are domain I; it reads MYAYLKGIIT…EDAHLLYGFR (63 aa). A domain II region spans residues 64–142; that stretch reads SEDEKKLFLS…VAGDGLPAKV (79 aa). Residues 143–147 are flexible linker; that stretch reads AVQAS. The domain III stretch occupies residues 148–197; sequence AENQELEEAMEAMLALGYKATELKKIKKFFEGTTDTAENYIKSALKMLVK.

Belongs to the RuvA family. In terms of assembly, homotetramer. Forms an RuvA(8)-RuvB(12)-Holliday junction (HJ) complex. HJ DNA is sandwiched between 2 RuvA tetramers; dsDNA enters through RuvA and exits via RuvB. An RuvB hexamer assembles on each DNA strand where it exits the tetramer. Each RuvB hexamer is contacted by two RuvA subunits (via domain III) on 2 adjacent RuvB subunits; this complex drives branch migration. In the full resolvosome a probable DNA-RuvA(4)-RuvB(12)-RuvC(2) complex forms which resolves the HJ.

Its subcellular location is the cytoplasm. In terms of biological role, the RuvA-RuvB-RuvC complex processes Holliday junction (HJ) DNA during genetic recombination and DNA repair, while the RuvA-RuvB complex plays an important role in the rescue of blocked DNA replication forks via replication fork reversal (RFR). RuvA specifically binds to HJ cruciform DNA, conferring on it an open structure. The RuvB hexamer acts as an ATP-dependent pump, pulling dsDNA into and through the RuvAB complex. HJ branch migration allows RuvC to scan DNA until it finds its consensus sequence, where it cleaves and resolves the cruciform DNA. The polypeptide is Holliday junction branch migration complex subunit RuvA (Streptococcus pneumoniae serotype 2 (strain D39 / NCTC 7466)).